The primary structure comprises 428 residues: 3-phosphoshikimate 1-carboxyvinyltransferase (428 aa).

Residues Lys23, Ser24, and Arg28 each coordinate 3-phosphoshikimate. A phosphoenolpyruvate-binding site is contributed by Lys23. Positions 97 and 125 each coordinate phosphoenolpyruvate. 3-phosphoshikimate contacts are provided by Ser170, Ser171, Gln172, Ser198, Asp314, Asn337, and Lys341. Position 172 (Gln172) interacts with phosphoenolpyruvate. Asp314 (proton acceptor) is an active-site residue. Residues Arg345, Arg387, and Lys412 each contribute to the phosphoenolpyruvate site.

Belongs to the EPSP synthase family. As to quaternary structure, monomer.

Its subcellular location is the cytoplasm. It catalyses the reaction 3-phosphoshikimate + phosphoenolpyruvate = 5-O-(1-carboxyvinyl)-3-phosphoshikimate + phosphate. Its pathway is metabolic intermediate biosynthesis; chorismate biosynthesis; chorismate from D-erythrose 4-phosphate and phosphoenolpyruvate: step 6/7. Catalyzes the transfer of the enolpyruvyl moiety of phosphoenolpyruvate (PEP) to the 5-hydroxyl of shikimate-3-phosphate (S3P) to produce enolpyruvyl shikimate-3-phosphate and inorganic phosphate. This chain is 3-phosphoshikimate 1-carboxyvinyltransferase, found in Edwardsiella ictaluri (strain 93-146).